Reading from the N-terminus, the 524-residue chain is Probable inorganic phosphate transporter 1-2 (524 aa).

Topologically, residues 1 to 24 are cytoplasmic; sequence MAEQQLGVLKALDVAKTQLYHFTA. Residues 25–45 traverse the membrane as a helical segment; it reads IVIAGMGFFTDAYDLFCVSLV. At 46–70 the chain is on the extracellular side; the sequence is TKLLGRIYYFNPESAKPGSLPPHVA. The helical transmembrane segment at 71–91 threads the bilayer; the sequence is AAVNGVALCGTLSGQLFFGWL. Residues 92 to 99 lie on the Cytoplasmic side of the membrane; that stretch reads GDKLGRKK. Residues 100–120 form a helical membrane-spanning segment; the sequence is VYGLTLIMMILCSVASGLSFG. The Extracellular segment spans residues 121-131; the sequence is NEAKGVMTTLC. A helical membrane pass occupies residues 132 to 152; that stretch reads FFRFWLGFGIGGDYPLSATIM. Residues 153 to 161 are Cytoplasmic-facing; that stretch reads SEYANKKTR. A helical membrane pass occupies residues 162 to 182; sequence GAFIAAVFAMQGVGILAGGFV. Topologically, residues 183-211 are extracellular; that stretch reads ALAVSSIFDKKFPAPTYAVNRALSTPPQV. The chain crosses the membrane as a helical span at residues 212–232; it reads DYIWRIIVMFGALPAALTYYW. The Cytoplasmic portion of the chain corresponds to 233 to 292; it reads RMKMPETARYTALVAKNIKQATADMSKVLQTDIELEERVEDDVKDPRQNYGLFSKEFLRR. The helical transmembrane segment at 293–313 threads the bilayer; sequence HGLHLLGTTSTWFLLDIAFYS. Residues 314-348 are Extracellular-facing; it reads QNLFQKDIFSAIGWIPKAATMNATHEVFRIARAQT. Residues 349-369 traverse the membrane as a helical segment; it reads LIALCSTVPGYWFTVAFIDTI. The Cytoplasmic segment spans residues 370 to 371; it reads GR. The helical transmembrane segment at 372–392 threads the bilayer; sequence FKIQLNGFFMMTVFMFAIAFP. Residues 393–402 lie on the Extracellular side of the membrane; that stretch reads YNHWIKPENR. The helical transmembrane segment at 403–423 threads the bilayer; sequence IGFVVMYSLTFFFANFGPNAT. Over 424-441 the chain is Cytoplasmic; the sequence is TFIVPAEIFPARLRSTCH. Residues 442–462 form a helical membrane-spanning segment; that stretch reads GISAAAGKAGAIIGAFGFLYA. Residues 463–484 are Extracellular-facing; that stretch reads AQNQDKAKVDAGYPPGIGVKNS. The chain crosses the membrane as a helical span at residues 485 to 505; the sequence is LIVLGVLNFIGMLFTFLVPEP. Over 506-524 the chain is Cytoplasmic; it reads KGKSLEELSGEAEVSHDEK.

It belongs to the major facilitator superfamily. Phosphate:H(+) symporter (TC 2.A.1.9) family. As to expression, root specific, especially in trichoblasts. In mature plants, localized in root cortical cells and young lateral roots.

The protein localises to the membrane. Functionally, high-affinity transporter for external inorganic phosphate. This is Probable inorganic phosphate transporter 1-2 (PHT1-2) from Arabidopsis thaliana (Mouse-ear cress).